The following is a 222-amino-acid chain: Large ribosomal subunit protein uL1 (222 aa).

It belongs to the universal ribosomal protein uL1 family. In terms of assembly, part of the 50S ribosomal subunit.

Its function is as follows. Binds directly to 23S rRNA. Probably involved in E site tRNA release. Protein L1 is also a translational repressor protein, it controls the translation of its operon by binding to its mRNA. This Pyrobaculum islandicum (strain DSM 4184 / JCM 9189 / GEO3) protein is Large ribosomal subunit protein uL1.